The primary structure comprises 298 residues: Bifunctional methyltransferase/endonuclease (298 aa).

The tract at residues 1-79 (MQSIDLYSYL…SLGIDEKIRR (79 aa)) is probable methylated-DNA--protein-cysteine methyltransferase. Cys-56 is an active-site residue. The segment at 80–298 (LRNDGIEINN…TVALRRNNII (219 aa)) is endonuclease V. Mg(2+)-binding residues include Asp-137 and Asp-197.

It in the N-terminal section; belongs to the MGMT family. This sequence in the C-terminal section; belongs to the endonuclease V family. The cofactor is Mg(2+).

It localises to the cytoplasm. It catalyses the reaction Endonucleolytic cleavage at apurinic or apyrimidinic sites to products with a 5'-phosphate.. In terms of biological role, DNA repair enzyme involved in the repair of deaminated bases. Selectively cleaves double-stranded DNA at the second phosphodiester bond 3' to a deoxyinosine leaving behind the intact lesion on the nicked DNA. The sequence is that of Bifunctional methyltransferase/endonuclease from Picrophilus torridus (strain ATCC 700027 / DSM 9790 / JCM 10055 / NBRC 100828 / KAW 2/3).